The chain runs to 249 residues: Sugar fermentation stimulation protein homolog (249 aa).

This sequence belongs to the SfsA family.

The chain is Sugar fermentation stimulation protein homolog from Prochlorococcus marinus (strain MIT 9515).